A 398-amino-acid chain; its full sequence is Argininosuccinate synthase (398 aa).

8–16 (AYSGGLDTS) contacts ATP. Position 87 (tyrosine 87) interacts with L-citrulline. Glycine 117 serves as a coordination point for ATP. Threonine 119, asparagine 123, and aspartate 124 together coordinate L-aspartate. Asparagine 123 contributes to the L-citrulline binding site. Residues arginine 127, serine 175, glutamate 259, and tyrosine 271 each coordinate L-citrulline.

The protein belongs to the argininosuccinate synthase family. Type 1 subfamily. In terms of assembly, homotetramer.

It is found in the cytoplasm. The catalysed reaction is L-citrulline + L-aspartate + ATP = 2-(N(omega)-L-arginino)succinate + AMP + diphosphate + H(+). Its pathway is amino-acid biosynthesis; L-arginine biosynthesis; L-arginine from L-ornithine and carbamoyl phosphate: step 2/3. This Corynebacterium kroppenstedtii (strain DSM 44385 / JCM 11950 / CIP 105744 / CCUG 35717) protein is Argininosuccinate synthase.